Here is a 1226-residue protein sequence, read N- to C-terminus: Polyamine-transporting ATPase 13A3 (1226 aa).

At 1–28 (MDREERKTINQGQEDEMEIYGYNLSRWK) the chain is on the cytoplasmic side. An intramembrane segment occupies 29–49 (LAIVSLGVICSGGFLLLLLYW). Topologically, residues 50 to 205 (MPEWRVKATC…IAVKVPSVFK (156 aa)) are cytoplasmic. A Phosphoserine modification is found at Ser98. The chain crosses the membrane as a helical span at residues 206–226 (LLIKEVLNPFYIFQLFSVILW). Topologically, residues 227-232 (STDEYY) are lumenal. The helical transmembrane segment at 233–253 (YYALAIVVMSIVSIVSSLYSI) threads the bilayer. Topologically, residues 254-409 (RKQYVMLHDM…KPTDFKLYRD (156 aa)) are cytoplasmic. A helical membrane pass occupies residues 410-430 (AYLFLLCLVAVAGIGFIYTII). Residues 431-448 (NSILNEVQVGVIIIESLD) lie on the Lumenal side of the membrane. The chain crosses the membrane as a helical span at residues 449 to 469 (IITITVPPALPAAMTAGIVYA). The Cytoplasmic segment spans residues 470–940 (QRRLKKIGIF…ALITSFCVFK (471 aa)). Asp498 acts as the 4-aspartylphosphate intermediate in catalysis. Asp498 and Thr500 together coordinate Mg(2+). Residues 498–500 (DKT), Phe628, Arg684, and Asp750 each bind ATP. At Ser817 the chain carries Phosphoserine. Mg(2+) is bound by residues Asp883 and Asp887. ATP is bound at residue 883-887 (DGAND). Residues 941–961 (FMALYSIIQYFSVTLLYSILS) traverse the membrane as a helical segment. A topological domain (lumenal) is located at residue Asn962. Residues 963–983 (LGDFQFLFIDLAIILVVVFTM) form a helical membrane-spanning segment. At 984 to 999 (SLNPAWKELVAQRPPS) the chain is on the cytoplasmic side. A helical membrane pass occupies residues 1000 to 1020 (GLISGALLFSVLSQIIICIGF). The Lumenal segment spans residues 1021–1073 (QSLGFFWVKQQPWYEVWHPKSDACNTTGSGFWNSSHVDNETELDEHNIQNYEN). A helical transmembrane segment spans residues 1074 to 1094 (TTVFFISSFQYLIVAIAFSKG). At 1095-1105 (KPFRQPCYKNY) the chain is on the cytoplasmic side. The helical transmembrane segment at 1106–1126 (FFVFSVIFLYIFILFIMLYPV) threads the bilayer. Residues 1127 to 1143 (ASVDQVLQIVCVPYQWR) lie on the Lumenal side of the membrane. The helical transmembrane segment at 1144-1164 (VTMLIIVLVNAFVSITVEESV) threads the bilayer. At 1165–1226 (DRWGKCCLPW…NGSCQIITIT (62 aa)) the chain is on the cytoplasmic side.

The protein belongs to the cation transport ATPase (P-type) (TC 3.A.3) family. Type V subfamily. In terms of tissue distribution, broadly expressed.

The protein resides in the recycling endosome membrane. It localises to the early endosome membrane. It is found in the late endosome membrane. The catalysed reaction is putrescine(out) + ATP + H2O = putrescine(in) + ADP + phosphate + H(+). In terms of biological role, ATP-driven pump involved in endocytosis-dependent polyamine transport. Uses ATP as an energy source to transfer polyamine precursor putrescine from the endosomal compartment to the cytosol. The chain is Polyamine-transporting ATPase 13A3 from Homo sapiens (Human).